A 165-amino-acid chain; its full sequence is Lipoprotein signal peptidase (165 aa).

4 helical membrane passes run phenylalanine 7–isoleucine 27, threonine 28–valine 48, phenylalanine 61–tryptophan 81, and aspartate 87–isoleucine 107. Residues aspartate 117 and aspartate 136 contribute to the active site. Residues serine 128–isoleucine 148 traverse the membrane as a helical segment.

Belongs to the peptidase A8 family.

Its subcellular location is the cell inner membrane. The catalysed reaction is Release of signal peptides from bacterial membrane prolipoproteins. Hydrolyzes -Xaa-Yaa-Zaa-|-(S,diacylglyceryl)Cys-, in which Xaa is hydrophobic (preferably Leu), and Yaa (Ala or Ser) and Zaa (Gly or Ala) have small, neutral side chains.. It participates in protein modification; lipoprotein biosynthesis (signal peptide cleavage). In terms of biological role, this protein specifically catalyzes the removal of signal peptides from prolipoproteins. This chain is Lipoprotein signal peptidase, found in Bartonella bacilliformis (strain ATCC 35685 / KC583 / Herrer 020/F12,63).